The primary structure comprises 348 residues: NADH-ubiquinone oxidoreductase chain 2 (348 aa).

10 helical membrane-spanning segments follow: residues 3 to 23, 24 to 44, 60 to 80, 95 to 115, 136 to 156, 177 to 197, 198 to 218, 239 to 259, 273 to 293, and 325 to 345; these read PFIL…TFAS, SHWL…IPLM, FITQ…NAWI, ASML…HFWL, LAPF…ITFL, ILAY…QFNQ, QLAL…FMIF, LTAI…LSGF, DIPL…YFYL, and LAIS…TLAL.

Belongs to the complex I subunit 2 family.

It localises to the mitochondrion inner membrane. It catalyses the reaction a ubiquinone + NADH + 5 H(+)(in) = a ubiquinol + NAD(+) + 4 H(+)(out). Its function is as follows. Core subunit of the mitochondrial membrane respiratory chain NADH dehydrogenase (Complex I) that is believed to belong to the minimal assembly required for catalysis. Complex I functions in the transfer of electrons from NADH to the respiratory chain. The immediate electron acceptor for the enzyme is believed to be ubiquinone. The polypeptide is NADH-ubiquinone oxidoreductase chain 2 (MT-ND2) (Gadus morhua (Atlantic cod)).